We begin with the raw amino-acid sequence, 311 residues long: Pyrimidine-specific ribonucleoside hydrolase RihA (311 aa).

His-240 is a catalytic residue.

This sequence belongs to the IUNH family. RihA subfamily.

Functionally, hydrolyzes with equal efficiency cytidine or uridine to ribose and cytosine or uracil, respectively. This is Pyrimidine-specific ribonucleoside hydrolase RihA from Escherichia coli O9:H4 (strain HS).